We begin with the raw amino-acid sequence, 449 residues long: Pectate lyase L (449 aa).

Residues 1–26 form the signal peptide; it reads MFKRNDRSKNGFNALRLGVSFVLASS. Cysteine 27 carries the N-palmitoyl cysteine lipid modification. Residue cysteine 27 is the site of S-diacylglycerol cysteine attachment. PbH1 repeat units follow at residues 158 to 179, 180 to 202, 213 to 242, 245 to 267, 274 to 308, 336 to 358, and 359 to 391; these read GDFW…IYIG, GSNN…QLGR, PANN…AAKL, GSGN…DLYS, IGAV…KLGG, PGTI…AFDK, and GEHV…WWKN. Aspartate 236, aspartate 260, aspartate 261, and aspartate 264 together coordinate Ca(2+). The Proton acceptor role is filled by lysine 305.

Belongs to the polysaccharide lyase 9 family. Requires Ca(2+) as cofactor.

It is found in the secreted. It catalyses the reaction Eliminative cleavage of (1-&gt;4)-alpha-D-galacturonan to give oligosaccharides with 4-deoxy-alpha-D-galact-4-enuronosyl groups at their non-reducing ends.. With respect to regulation, activated in presence of the surfactant polysorbate 20, while inhibited in the presence of polysorbate 40, polysorbate 60, polysorbate 80, Triton X-100 and sodium dodecyl sulfate. Inhibited by the metal chelator ethylenediaminetetraacetic acid (EDTA). Inhibited by iron and cobalt ions. Functionally, presents an endo-cleaving activity on the homogalacturonan (HG) region in pectin with a preference for low- or unmethylated pectin. In Paenibacillus polymyxa (strain SC2) (Bacillus polymyxa), this protein is Pectate lyase L.